The primary structure comprises 243 residues: Probable transcriptional regulator ycf27 (243 aa).

One can recognise a Response regulatory domain in the interval 7–120 (KILVVDDEAS…ELEARIRSVL (114 aa)). Residue D56 is modified to 4-aspartylphosphate. The segment at residues 76–94 (DVPIIMLTALGEVCDRITG) is a DNA-binding region (H-T-H motif). Residues 135–236 (SGIISIGFLK…ARGTGYLFQR (102 aa)) constitute a DNA-binding region (ompR/PhoB-type).

The protein localises to the plastid. Its subcellular location is the chloroplast. In terms of biological role, probable promoter-specific protein mediating the interaction between DNA and RNA polymerase. This chain is Probable transcriptional regulator ycf27 (ycf27), found in Pyropia yezoensis (Susabi-nori).